A 120-amino-acid polypeptide reads, in one-letter code: Ribosome-binding factor A (120 aa).

The protein belongs to the RbfA family. As to quaternary structure, monomer. Binds 30S ribosomal subunits, but not 50S ribosomal subunits or 70S ribosomes.

It is found in the cytoplasm. Functionally, one of several proteins that assist in the late maturation steps of the functional core of the 30S ribosomal subunit. Associates with free 30S ribosomal subunits (but not with 30S subunits that are part of 70S ribosomes or polysomes). Required for efficient processing of 16S rRNA. May interact with the 5'-terminal helix region of 16S rRNA. This chain is Ribosome-binding factor A, found in Clostridium botulinum (strain Okra / Type B1).